Consider the following 414-residue polypeptide: MQPRRPDRFDGLEYRGTSWGRGDGDVPPYQSSFPARSLSSSGDLSQQWVTSPPDIPGSRNLHWGEKSPQYGADSNAGPPAFGEENSGSSGEQVNRFAGFGIGLASLFTENVLAHPCIVLRRQCQVNYHAQNYQLSPFSIVNIMYNFTKTQGPRALWKGMGSTFIVQGISLGAEGMLSEFTHLPRELSHKWNLKQLGGHLLLKGLVYVIVTPFYSASLIETVQSEIIHDNPGILDCLKEGIGRVLNLGVPYSKRLLPLLVLTFPTVLHGILHYIISSTIQKCVLFFIKKRSPPQLPAEGSNAVQNKLEDYFPELLANFAASLCADVLLYPLETVMHRLHIQGTRTIIDNTDLGHEVVPINTQYEGLKDCINTIKREEGGLGFYKGFGAVVVQYTLHAIVLQITKIIYSSVVQTAR.

Basic and acidic residues predominate over residues 1-13; it reads MQPRRPDRFDGLE. A disordered region spans residues 1–89; it reads MQPRRPDRFD…AFGEENSGSS (89 aa). Residues 29–50 are compositionally biased toward polar residues; sequence YQSSFPARSLSSSGDLSQQWVT. The Solcar 1 repeat unit spans residues 92–183; sequence QVNRFAGFGI…GMLSEFTHLP (92 aa). A run of 6 helical transmembrane segments spans residues 99 to 119, 159 to 179, 198 to 218, 254 to 274, 310 to 330, and 379 to 399; these read FGIG…CIVL, MGST…LSEF, HLLL…ASLI, LLPL…HYII, FPEL…LYPL, and LGFY…AIVL. A Solcar 2 repeat occupies 307–412; sequence EDYFPELLAN…KIIYSSVVQT (106 aa).

This sequence belongs to the mitochondrial carrier (TC 2.A.29) family.

The protein localises to the mitochondrion outer membrane. May play a role in mitochondrial dynamics by controlling mitochondrial membrane fission. This Xenopus laevis (African clawed frog) protein is Solute carrier family 25 member 46-B (slc25a46-b).